Here is a 430-residue protein sequence, read N- to C-terminus: Enolase (430 aa).

Q167 lines the (2R)-2-phosphoglycerate pocket. The active-site Proton donor is E209. 3 residues coordinate Mg(2+): D246, E287, and D314. Residues K339, R368, S369, and K390 each coordinate (2R)-2-phosphoglycerate. The active-site Proton acceptor is the K339.

This sequence belongs to the enolase family. It depends on Mg(2+) as a cofactor.

Its subcellular location is the cytoplasm. The protein localises to the secreted. It is found in the cell surface. The catalysed reaction is (2R)-2-phosphoglycerate = phosphoenolpyruvate + H2O. It functions in the pathway carbohydrate degradation; glycolysis; pyruvate from D-glyceraldehyde 3-phosphate: step 4/5. In terms of biological role, catalyzes the reversible conversion of 2-phosphoglycerate (2-PG) into phosphoenolpyruvate (PEP). It is essential for the degradation of carbohydrates via glycolysis. In Prochlorococcus marinus (strain MIT 9301), this protein is Enolase.